The sequence spans 221 residues: MKTVTSQKMRELETAAVKEFGIDEDVLMEHAGRSAAEEILNCFLSENKEKKVIIVCGHGGNGGDGLVCGRYLMERGVDVYCYIIPPFQGSYKGLVLKNLKRAFFSHLSVKEIYQNLSDLKNSVADAYIVIDALLGIGFKGEVKKNYKETIEVLNSSPSIKIAFDIPSGLNADSGQNEGAVFKADYTYAMGFAKQGCLKAKDICGEIKVLNIGLPKELLSKV.

The YjeF N-terminal domain occupies 9–219 (MRELETAAVK…NIGLPKELLS (211 aa)). Position 60–64 (60–64 (GNGGD)) interacts with (6S)-NADPHX. K(+) is bound by residues Asn-61 and Asp-131. (6S)-NADPHX contacts are provided by residues 135 to 141 (GIGFKGE), Tyr-146, and Asp-164. Ser-167 serves as a coordination point for K(+).

This sequence belongs to the NnrE/AIBP family. K(+) serves as cofactor.

It catalyses the reaction (6R)-NADHX = (6S)-NADHX. The catalysed reaction is (6R)-NADPHX = (6S)-NADPHX. Functionally, catalyzes the epimerization of the S- and R-forms of NAD(P)HX, a damaged form of NAD(P)H that is a result of enzymatic or heat-dependent hydration. This is a prerequisite for the S-specific NAD(P)H-hydrate dehydratase to allow the repair of both epimers of NAD(P)HX. This is NAD(P)H-hydrate epimerase from Elusimicrobium minutum (strain Pei191).